The following is a 415-amino-acid chain: MGLRKLSIANVDLKDKRVLMRVDFNVPMKDGKVTNTQRIVGASPTIKYALDKGAKSIVLMSHLGGRVGNKVARYSLNPVGEEVSKLLGKPVKFLPDCVGPETTEGMCQSSAGSVFLLENLRFHVEEEGKGVSPTGEKIKATPEQVKAFSENLTKLGDVYLNDAFGTAHRAHASMVGCRLTQRACGFLMDKELTYFSKLLDQPQHPFLAIIGGAKVSDKIQLIKNMLDKVDELIITGGMAFTFLKKLHNMKIGKSLYDEPGAAIVDEWMQLAKSKNVKIHLPVDFITGDKFAEDANTGTATVEPGIRDTHMGLDGGPKTMEEFCKVISRAKTIVWNGPMGVFEMEKFAGGTKAAMDAVVAATTKGVTNNNGGGDTATCCPKWKTEAQVSHVSTGVGASLELLEGKQLPGILALSDA.

Valine 22, aspartate 23, phenylalanine 24, asparagine 25, glutamine 37, arginine 38, serine 61, histidine 62, glycine 64, leucine 120, arginine 121, histidine 168, and arginine 169 together coordinate (2R)-3-phosphoglycerate. Glycine 212 is an ADP binding site. Glycine 212 serves as a coordination point for CDP. 2 residues coordinate AMP: alanine 213 and lysine 214. Residue alanine 213 coordinates ATP. Mg(2+) is bound at residue alanine 213. Aspartate 217 contacts CDP. Mg(2+) is bound at residue aspartate 217. Residue lysine 218 participates in AMP binding. Lysine 218 serves as a coordination point for ATP. Glycine 236 is a binding site for ADP. Position 236 (glycine 236) interacts with CDP. AMP is bound by residues glycine 237 and glycine 311. ATP is bound by residues glycine 237 and glycine 311. CDP contacts are provided by glycine 336 and phenylalanine 341. ADP is bound at residue phenylalanine 341. Position 342 (glutamate 342) interacts with AMP. Positions 342, 373, and 374 each coordinate ATP. Mg(2+) is bound at residue aspartate 373.

This sequence belongs to the phosphoglycerate kinase family. In terms of assembly, monomer. Mg(2+) is required as a cofactor.

It is found in the cytoplasm. The catalysed reaction is (2R)-3-phosphoglycerate + ATP = (2R)-3-phospho-glyceroyl phosphate + ADP. It participates in carbohydrate degradation; glycolysis; pyruvate from D-glyceraldehyde 3-phosphate: step 2/5. This is Phosphoglycerate kinase (PGK) from Opisthorchis sinensis (Clonorchis sinensis).